A 103-amino-acid chain; its full sequence is Small ribosomal subunit protein uS10 (103 aa).

This sequence belongs to the universal ribosomal protein uS10 family. As to quaternary structure, part of the 30S ribosomal subunit.

In terms of biological role, involved in the binding of tRNA to the ribosomes. This is Small ribosomal subunit protein uS10 from Chlorobium chlorochromatii (strain CaD3).